A 349-amino-acid polypeptide reads, in one-letter code: Aldehyde reductase YahK (349 aa).

The Zn(2+) site is built by Cys40, His62, Cys93, Cys96, Cys99, Cys107, and Cys158.

Belongs to the zinc-containing alcohol dehydrogenase family. It depends on Zn(2+) as a cofactor.

The catalysed reaction is a primary alcohol + NADP(+) = an aldehyde + NADPH + H(+). Its function is as follows. Catalyzes the reduction of a wide range of aldehydes into their corresponding alcohols. Has a strong preference for NADPH over NADH as the electron donor. Cannot use a ketone as substrate. Is a major source of NADPH-dependent aldehyde reductase activity in E.coli. The in vivo functions of YahK has yet to be determined. The sequence is that of Aldehyde reductase YahK (yahK) from Escherichia coli (strain K12).